Here is a 428-residue protein sequence, read N- to C-terminus: Sialidase-3 (428 aa).

The FRIP motif signature appears at 24–27 (YRIP). Residues Arg-25 and Arg-45 each coordinate substrate. Asp-50 serves as the catalytic Proton acceptor. The BNR 1 repeat unit spans residues 129 to 140 (IYSQDAGCSWSE). Substrate-binding residues include Tyr-179 and Tyr-181. The stretch at 203–214 (IYSDDLGVTWHH) is one BNR 2 repeat. 2 residues coordinate substrate: Glu-225 and Arg-245. A BNR 3 repeat occupies 254 to 265 (ALSTDHGEGFQR). The disordered stretch occupies residues 294–318 (RCQDSSSKDAPTIQQSSPGSSLRLE). Residues 301–313 (KDAPTIQQSSPGS) show a composition bias toward polar residues. Ser-313 is subject to Phosphoserine. Arg-340 contributes to the substrate binding site. Tyr-370 (nucleophile) is an active-site residue. Residue Glu-387 is part of the active site.

It belongs to the glycosyl hydrolase 33 family. Interacts with CAV1; this interaction enhances NEU3 sialidase activity within caveola. Interacts with EGFR; this interaction mediates desialylation of EGFR and enhances downstream signaling. In terms of processing, palmitoylated; may regulate intracellular trafficking and anchorage to plasma membrane and endomembranes. In terms of tissue distribution, highly expressed in skeletal muscle, testis, adrenal gland and thymus, followed by pancreas, liver, heart and thymus. Weakly expressed in kidney, placenta, brain and lung.

It is found in the cell membrane. It localises to the membrane. The protein localises to the caveola. Its subcellular location is the early endosome membrane. The protein resides in the recycling endosome membrane. It is found in the lysosome membrane. The enzyme catalyses Hydrolysis of alpha-(2-&gt;3)-, alpha-(2-&gt;6)-, alpha-(2-&gt;8)- glycosidic linkages of terminal sialic acid residues in oligosaccharides, glycoproteins, glycolipids, colominic acid and synthetic substrates.. It carries out the reaction a ganglioside GD1a + H2O = a ganglioside GM1 + N-acetylneuraminate. It catalyses the reaction a ganglioside GD1a (d18:1(4E)) + H2O = a ganglioside GM1 (d18:1(4E)) + N-acetylneuraminate. The catalysed reaction is a ganglioside GD1b + H2O = a ganglioside GM1 + N-acetylneuraminate. The enzyme catalyses a ganglioside GD1b (d18:1(4E)) + H2O = a ganglioside GM1 (d18:1(4E)) + N-acetylneuraminate. It carries out the reaction a ganglioside GD3 + H2O = a ganglioside GM3 + N-acetylneuraminate. It catalyses the reaction a ganglioside GD3 (d18:1(4E)) + H2O = a ganglioside GM3 (d18:1(4E)) + N-acetylneuraminate. The catalysed reaction is a ganglioside GM3 + H2O = a beta-D-galactosyl-(1-&gt;4)-beta-D-glucosyl-(1&lt;-&gt;1)-ceramide + N-acetylneuraminate. The enzyme catalyses a ganglioside GM1 + H2O = a ganglioside GA1 + N-acetylneuraminate. It carries out the reaction a ganglioside GM1 (d18:1(4E)) + H2O = a ganglioside GA1 (d18:1(4E)) + N-acetylneuraminate. It catalyses the reaction a ganglioside GM2 (d18:1(4E)) + H2O = a ganglioside GA2 (d18:1(4E)) + N-acetylneuraminate. The catalysed reaction is a ganglioside GM3 (d18:1(4E)) + H2O = a beta-D-Gal-(1-&gt;4)-beta-D-Glc-(1&lt;-&gt;1)-Cer(d18:1(4E)) + N-acetylneuraminate. The enzyme catalyses a ganglioside GT1b + H2O = a ganglioside GD1b + N-acetylneuraminate. In terms of biological role, exo-alpha-sialidase that catalyzes the hydrolytic cleavage of the terminal sialic acid (N-acetylneuraminic acid, Neu5Ac) of a glycan moiety in the catabolism of glycolipids, glycoproteins and oligosacharides. Displays high catalytic efficiency for gangliosides including alpha-(2-&gt;3)-sialylated GD1a and GM3 and alpha-(2-&gt;8)-sialylated GD3. Plays a role in the regulation of transmembrane signaling through the modulation of ganglioside content of the lipid bilayer and by direct interaction with signaling receptors, such as EGFR. Desialylates EGFR and activates downstream signaling in proliferating cells. Contributes to clathrin-mediated endocytosis by regulating sorting of endocytosed receptors to early and recycling endosomes. The polypeptide is Sialidase-3 (NEU3) (Homo sapiens (Human)).